Reading from the N-terminus, the 475-residue chain is Adenosylhomocysteinase (475 aa).

Substrate contacts are provided by threonine 66, aspartate 141, and glutamate 201. 202–204 (TTT) provides a ligand contact to NAD(+). Substrate-binding residues include lysine 231 and aspartate 235. Residues asparagine 236, 265-270 (GYGEVG), glutamate 288, asparagine 323, 344-346 (IGH), and asparagine 389 each bind NAD(+).

The protein belongs to the adenosylhomocysteinase family. NAD(+) is required as a cofactor.

The protein resides in the cytoplasm. The catalysed reaction is S-adenosyl-L-homocysteine + H2O = L-homocysteine + adenosine. It functions in the pathway amino-acid biosynthesis; L-homocysteine biosynthesis; L-homocysteine from S-adenosyl-L-homocysteine: step 1/1. Functionally, may play a key role in the regulation of the intracellular concentration of adenosylhomocysteine. The chain is Adenosylhomocysteinase from Geobacter sulfurreducens (strain ATCC 51573 / DSM 12127 / PCA).